A 505-amino-acid polypeptide reads, in one-letter code: Catalase (505 aa).

Residues His-56 and Asn-129 contribute to the active site. Position 339 (Tyr-339) interacts with heme.

It belongs to the catalase family. The cofactor is heme.

It is found in the cytoplasm. It catalyses the reaction 2 H2O2 = O2 + 2 H2O. In terms of biological role, decomposes hydrogen peroxide into water and oxygen; serves to protect cells from the toxic effects of hydrogen peroxide. The chain is Catalase (katA) from Helicobacter pylori (strain J99 / ATCC 700824) (Campylobacter pylori J99).